Reading from the N-terminus, the 501-residue chain is MEQQDQSMKEGRLTLVLALATLIAAFGSSFQYGYNVAAVNSPALLMQQFYNETYYGRTGEFMEDFPLTLLWSVTVSMFPFGGFIGSLLVGPLVNKFGRKGALLFNNIFSIVPAILMGCSRVATSFELIIISRLLVGICAGVSSNVVPMYLGELAPKNLRGALGVVPQLFITVGILVAQIFGLRNLLANVDGWPILLGLTGVPAALQLLLLPFFPESPRYLLIQKKDEAAAKKALQTLRGWDSVDREVAEIRQEDEAEKAAGFISVLKLFRMRSLRWQLLSIIVLMGGQQLSGVNAIYYYADQIYLSAGVPEEHVQYVTAGTGAVNVVMTFCAVFVVELLGRRLLLLLGFSICLIACCVLTAALALQDTVSWMPYISIVCVISYVIGHALGPSPIPALLITEIFLQSSRPSAFMVGGSVHWLSNFTVGLIFPFIQEGLGPYSFIVFAVICLLTTIYIFLIVPETKAKTFIEINQIFTKMNKVSEVYPEKEELKELPPVTSEQ.

An N-acetylmethionine modification is found at Met-1. The Cytoplasmic segment spans residues 1–18 (MEQQDQSMKEGRLTLVLA). A helical transmembrane segment spans residues 19–39 (LATLIAAFGSSFQYGYNVAAV). Tyr-32 contributes to the D-fructose binding site. Over 40 to 68 (NSPALLMQQFYNETYYGRTGEFMEDFPLT) the chain is Extracellular. Asn-51 carries N-linked (GlcNAc...) asparagine glycosylation. Residues 69 to 91 (LLWSVTVSMFPFGGFIGSLLVGP) traverse the membrane as a helical segment. Residues 92–98 (LVNKFGR) are Cytoplasmic-facing. Residues 99–119 (KGALLFNNIFSIVPAILMGCS) traverse the membrane as a helical segment. Over 120 to 126 (RVATSFE) the chain is Extracellular. Residues 127–149 (LIIISRLLVGICAGVSSNVVPMY) traverse the membrane as a helical segment. The Cytoplasmic segment spans residues 150–161 (LGELAPKNLRGA). The chain crosses the membrane as a helical span at residues 162–182 (LGVVPQLFITVGILVAQIFGL). Gln-167 provides a ligand contact to D-fructose. Residues 183–192 (RNLLANVDGW) are Extracellular-facing. The helical transmembrane segment at 193 to 213 (PILLGLTGVPAALQLLLLPFF) threads the bilayer. Residues 214–277 (PESPRYLLIQ…LFRMRSLRWQ (64 aa)) lie on the Cytoplasmic side of the membrane. Residues 278-298 (LLSIIVLMGGQQLSGVNAIYY) form a helical membrane-spanning segment. Residues Gln-288 and 296-298 (IYY) each bind D-fructose. At 299 to 313 (YADQIYLSAGVPEEH) the chain is on the extracellular side. Residues 314–334 (VQYVTAGTGAVNVVMTFCAVF) traverse the membrane as a helical segment. The Cytoplasmic segment spans residues 335-342 (VVELLGRR). Residues 343–363 (LLLLLGFSICLIACCVLTAAL) traverse the membrane as a helical segment. Residues 364-371 (ALQDTVSW) lie on the Extracellular side of the membrane. A helical membrane pass occupies residues 372–394 (MPYISIVCVISYVIGHALGPSPI). Residue His-387 participates in D-fructose binding. Over 395–412 (PALLITEIFLQSSRPSAF) the chain is Cytoplasmic. The helical transmembrane segment at 413–433 (MVGGSVHWLSNFTVGLIFPFI) threads the bilayer. 419–420 (HW) lines the D-fructose pocket. Residues 434 to 439 (QEGLGP) are Extracellular-facing. Residues 440 to 460 (YSFIVFAVICLLTTIYIFLIV) traverse the membrane as a helical segment. At 461 to 501 (PETKAKTFIEINQIFTKMNKVSEVYPEKEELKELPPVTSEQ) the chain is on the cytoplasmic side.

In terms of tissue distribution, detected in skeletal muscle, and in jejunum brush border membrane and basolateral membrane (at protein level). Expressed in small intestine, and at much lower levels in kidney, skeletal muscle, and adipose tissue.

It is found in the apical cell membrane. It localises to the cell membrane. The protein resides in the sarcolemma. The catalysed reaction is D-fructose(out) = D-fructose(in). The uptake of 2-deoxyglucose is inhibited by cytochalasin B. Fructose transport is inhibited by the flavonoids epigallocatechin gallate and apigenin but not quercetin. Functionally, functions as a fructose transporter that has only low activity with other monosaccharides. Can mediate the uptake of 2-deoxyglucose, but with low efficiency. Essential for fructose uptake in the small intestine. Plays a role in the regulation of salt uptake and blood pressure in response to dietary fructose. Required for the development of high blood pressure in response to high dietary fructose intake. In Homo sapiens (Human), this protein is Solute carrier family 2, facilitated glucose transporter member 5.